Reading from the N-terminus, the 170-residue chain is tRNA-splicing endonuclease (170 aa).

Active-site residues include Tyr110, His116, and Lys147.

Belongs to the tRNA-intron endonuclease family. Archaeal short subfamily. Homotetramer; although the tetramer contains four active sites, only two participate in the cleavage. Therefore, it should be considered as a dimer of dimers.

The enzyme catalyses pretRNA = a 3'-half-tRNA molecule with a 5'-OH end + a 5'-half-tRNA molecule with a 2',3'-cyclic phosphate end + an intron with a 2',3'-cyclic phosphate and a 5'-hydroxyl terminus.. In terms of biological role, endonuclease that removes tRNA introns. Cleaves pre-tRNA at the 5'- and 3'-splice sites to release the intron. The products are an intron and two tRNA half-molecules bearing 2',3' cyclic phosphate and 5'-OH termini. Recognizes a pseudosymmetric substrate in which 2 bulged loops of 3 bases are separated by a stem of 4 bp. In Pyrococcus horikoshii (strain ATCC 700860 / DSM 12428 / JCM 9974 / NBRC 100139 / OT-3), this protein is tRNA-splicing endonuclease.